The sequence spans 144 residues: TSC22 domain family protein 1 (144 aa).

The tract at residues 77–98 is leucine-zipper; sequence LKEQIKELIEKNSQLEQENNLL. The tract at residues 109–144 is disordered; the sequence is QFQAQLQTGSPPATTQPQGTTQPPAQPASQGSGPTA. Positions 115-144 are enriched in low complexity; that stretch reads QTGSPPATTQPQGTTQPPAQPASQGSGPTA.

This sequence belongs to the TSC-22/Dip/Bun family. Forms homodimers. Forms a heterodimer with TSC22D4/THG1. Interacts with histone H1-2. Interacts with GNL3.

The protein resides in the cytoplasm. It localises to the nucleus. Functionally, transcriptional repressor. Plays a role in the repression of hematopoietic precursor cell growth. Promotes IL2 deprivation-induced apoptosis in T-lymphocytes, via repression of TSC22D3/GILZ transcription and activation of the caspase cascade. Positively regulates cell death in response to TGFB3 during mammary gland involution. The chain is TSC22 domain family protein 1 from Bos taurus (Bovine).